A 393-amino-acid polypeptide reads, in one-letter code: S-adenosylmethionine synthase 2 (393 aa).

Glutamate 9 serves as a coordination point for Mg(2+). Histidine 15 contacts ATP. Glutamate 43 is a K(+) binding site. L-methionine is bound by residues glutamate 56 and glutamine 99. ATP is bound by residues aspartate 167 to lysine 169, serine 235 to phenylalanine 238, aspartate 246, arginine 252 to lysine 253, alanine 269, lysine 273, and lysine 277. Aspartate 246 serves as a coordination point for L-methionine. Lysine 277 provides a ligand contact to L-methionine.

It belongs to the AdoMet synthase family. Homotetramer. Requires Mn(2+) as cofactor. Mg(2+) serves as cofactor. Co(2+) is required as a cofactor. It depends on K(+) as a cofactor.

Its subcellular location is the cytoplasm. The catalysed reaction is L-methionine + ATP + H2O = S-adenosyl-L-methionine + phosphate + diphosphate. Its pathway is amino-acid biosynthesis; S-adenosyl-L-methionine biosynthesis; S-adenosyl-L-methionine from L-methionine: step 1/1. Its function is as follows. Catalyzes the formation of S-adenosylmethionine from methionine and ATP. The reaction comprises two steps that are both catalyzed by the same enzyme: formation of S-adenosylmethionine (AdoMet) and triphosphate, and subsequent hydrolysis of the triphosphate. The protein is S-adenosylmethionine synthase 2 (METK2) of Vitis vinifera (Grape).